We begin with the raw amino-acid sequence, 513 residues long: Prostaglandin E2 receptor EP4 subtype (513 aa).

The Extracellular segment spans residues 1–44 (MAEVGGTIPRSNRELQRCVLLTTTIMSIPGVNASFSSTPERLNS). N-linked (GlcNAc...) asparagine glycosylation is present at asparagine 32. The chain crosses the membrane as a helical span at residues 45–68 (PVTIPAVMFIFGVVGNLVAIVVLC). Residues 69-80 (KSRKEQKETTFY) are Cytoplasmic-facing. The helical transmembrane segment at 81 to 104 (TLVCGLAVTDLLGTLLVSPVTIAT) threads the bilayer. At 105-121 (YMKGQWPGDQALCDYST) the chain is on the extracellular side. Residues cysteine 117 and cysteine 195 are joined by a disulfide bond. The chain crosses the membrane as a helical span at residues 122-140 (FILLFFGLSGLSIICAMSI). Residues 141 to 160 (ERYLAINHAYFYSHYVDKRL) are Cytoplasmic-facing. A helical transmembrane segment spans residues 161–185 (AGLTLFAIYASNVLFCALPNMGLGR). Topologically, residues 186–209 (SERQYPGTWCFIDWTTNVTAYAAF) are extracellular. A helical membrane pass occupies residues 210–236 (SYMYAGFSSFLILATVLCNVLVCGALL). Residues 237–295 (RMHRQFMRRTSLGTEQHHAAAAAAVASVACRGHAGASPALQRLSDFRRRRSFRRIAGAE) are Cytoplasmic-facing. The helical transmembrane segment at 296–323 (IQMVILLIATSLVVLICSIPLVVRVFIN) threads the bilayer. Topologically, residues 324-340 (QLYQPNVVKDISRNPDL) are extracellular. Residues 341-360 (QAIRIASVNPILDPWIYILL) traverse the membrane as a helical segment. The Cytoplasmic portion of the chain corresponds to 361–513 (RKTVLSKAIE…ETLKLSEKCI (153 aa)). Positions 383–403 (GRDSSAQHCSESRRTSSAMSG) are disordered. The span at 384–403 (RDSSAQHCSESRRTSSAMSG) shows a compositional bias: polar residues. Phosphoserine occurs at positions 402, 405, and 407.

The protein belongs to the G-protein coupled receptor 1 family. Interacts with FEM1A. In terms of processing, phosphorylation mediates agonist-mediated desensitization by promoting cytoplasmic retention. Abundant expression in ileum, thymus and mastocytoma P-815 cells. Also observed in lung, spleen, heart and uterus.

Its subcellular location is the cell membrane. Its function is as follows. Receptor for prostaglandin E2 (PGE2). The activity of this receptor is mediated by G(s) proteins that stimulate adenylate cyclase. Has a relaxing effect on smooth muscle. May play an important role in regulating renal hemodynamics, intestinal epithelial transport, adrenal aldosterone secretion, and uterine function. In Mus musculus (Mouse), this protein is Prostaglandin E2 receptor EP4 subtype (Ptger4).